A 141-amino-acid chain; its full sequence is Hemoglobin subunit alpha-A (141 aa).

The region spanning 1 to 141 (VLSPADKSNV…VGTVLTAKYR (141 aa)) is the Globin domain. H58 contributes to the O2 binding site. H87 contacts heme b.

This sequence belongs to the globin family. In terms of assembly, heterotetramer of two alpha chains and two beta chains. As to expression, red blood cells.

Involved in oxygen transport from the lung to the various peripheral tissues. This is Hemoglobin subunit alpha-A (HBAA) from Passer montanus (Eurasian tree sparrow).